The following is a 465-amino-acid chain: MNETKKYLVIKAIAQGKKTKKRACVELNLSERQINRPLLAYQQKGKEAFRHGNRNRKPKHAIPDEIKERILKKYLSYETYKPNVLHFCELLAEEEGIKLSDTTVRKILYKKNILSPKSHRKTKKRVRKQAKLNLNQPLDNPILPTAKDFLEDPKKVHPSRPRKKFAGELIQMDASPHAWFGPETTNLHLAIDDASGNILGAYFDKQETLNAYYHVLEQILANHGIPLQMKTDKRTVFTYQASNSKKMEDDSYTQFGYACHQLGILLETTSIPQAKGRVERLNQTLQSRLPIELERNKIHTLEEANTFLLSYIQTFNEQFGNKTKLSVFEEAPNPSERNLILARLAERVVDSGHHIRFQNRCYIPTEQGKEVYFIRKTKALVLKAFDGDIYLNIADKIYHTKELLDHELYSKNFEQEPEQKKERRKYIPPQTHPWKLTSFKQYLHKNKKDYEEFTSEEIHSPQLQV.

The Integrase catalytic domain occupies 157–340 (HPSRPRKKFA…APNPSERNLI (184 aa)).

In terms of biological role, required for the transposition of the insertion element. The polypeptide is Transposase for insertion sequence IS1202 (Streptococcus pneumoniae).